Reading from the N-terminus, the 271-residue chain is Cyanophycinase (271 aa).

Catalysis depends on charge relay system residues serine 132, histidine 174, and glutamate 201.

This sequence belongs to the peptidase S51 family. As to quaternary structure, homodimer.

The catalysed reaction is [L-4-(L-arginin-2-N-yl)aspartate](n) + H2O = [L-4-(L-arginin-2-N-yl)aspartate](n-1) + L-4-(L-arginin-2-N-yl)aspartate. In terms of biological role, exopeptidase that catalyzes the hydrolytic cleavage of multi-L-arginyl-poly-L-aspartic acid (cyanophycin; a water-insoluble reserve polymer) into aspartate-arginine dipeptides. This Synechocystis sp. (strain ATCC 27184 / PCC 6803 / Kazusa) protein is Cyanophycinase (cphB).